A 565-amino-acid chain; its full sequence is Heme/hemopexin transporter protein HuxB (565 aa).

The first 26 residues, 1-26 (MKMRPRYSVIASAVSLGFVLSKSVMA), serve as a signal peptide directing secretion. One can recognise a POTRA domain in the interval 73–150 (FPLKQVQILD…GTVKILLLKG (78 aa)).

The protein belongs to the TPS (TC 1.B.20) family.

It localises to the cell outer membrane. Its function is as follows. Likely functions in the release of soluble HxuA from the cell. Functionally, probable member of a two partner secretion pathway (TPS) in which it mediates the secretion of HuxA. The sequence is that of Heme/hemopexin transporter protein HuxB (hxuB) from Haemophilus influenzae (strain ATCC 51907 / DSM 11121 / KW20 / Rd).